Here is an 872-residue protein sequence, read N- to C-terminus: Alanine--tRNA ligase (872 aa).

H567, H571, C669, and H673 together coordinate Zn(2+).

It belongs to the class-II aminoacyl-tRNA synthetase family. It depends on Zn(2+) as a cofactor.

The protein resides in the cytoplasm. It catalyses the reaction tRNA(Ala) + L-alanine + ATP = L-alanyl-tRNA(Ala) + AMP + diphosphate. Functionally, catalyzes the attachment of alanine to tRNA(Ala) in a two-step reaction: alanine is first activated by ATP to form Ala-AMP and then transferred to the acceptor end of tRNA(Ala). Also edits incorrectly charged Ser-tRNA(Ala) and Gly-tRNA(Ala) via its editing domain. The sequence is that of Alanine--tRNA ligase from Streptococcus pyogenes serotype M6 (strain ATCC BAA-946 / MGAS10394).